Consider the following 307-residue polypeptide: MKDESALFTIDHIIKLDNGQSIRVWETLPKKNVPEKKNTILIASGFARRMDHFAGLAEYLSTNGFHVIRYDSLHHVGLSSGCINEFTMSIGKNSLLTVVDWLTDHGVERIGLIAASLSARIAYEVVNKIKLSFLITAVGVVNLRDTLEKALEYDYLQLPISELPEDLDFEGHNLGSEVFVTDCFKHDWDTLDSTLNSVKGLAIPFIAFTANDDSWVKQSEVIELIDSIESSNCKLYSLIGSSHDLGENLVVLRNFYQSVTKAALALDDGLLDLEIDIIEPRFEDVTSITVKERRLKNEIENELLELA.

Residues S116, D213, and H243 each act as charge relay system in the active site.

The protein belongs to the LuxD family.

The protein operates within lipid metabolism; fatty acid reduction for biolumincescence. Its function is as follows. Acyl transferase is part of the fatty acid reductase system required for aldehyde biosynthesis; it produces fatty acids for the luminescent reaction. This is Acyl transferase from Aliivibrio fischeri (strain MJ11) (Vibrio fischeri).